Reading from the N-terminus, the 101-residue chain is Small ribosomal subunit protein uS14 (101 aa).

Over residues Met1 to Asn10 the composition is skewed to basic and acidic residues. The interval Met1–Lys23 is disordered. Basic residues predominate over residues Asn11–Lys23.

The protein belongs to the universal ribosomal protein uS14 family. As to quaternary structure, part of the 30S ribosomal subunit. Contacts proteins S3 and S10.

Its function is as follows. Binds 16S rRNA, required for the assembly of 30S particles and may also be responsible for determining the conformation of the 16S rRNA at the A site. The polypeptide is Small ribosomal subunit protein uS14 (Rhodopseudomonas palustris (strain BisB5)).